Here is a 418-residue protein sequence, read N- to C-terminus: MDKFLITGGVKLEGEVRISGAKNAALPLLAAMILADSPITLNNVPNLKDVNTLVKLIAGLGITMDYEGETVKADTSTLSNQFAPYELVKTMRASILVLGPLLARYGNAQVSLPGGCAIGSRPVDQHLKALEALGAHIEVENGYVHATVDGRLKGADITFDMVTVGGTENILMAAVLAEGTTTIRNAAREPEITDLAQMLIEMGAKIEGLDTDTLVVTGVESLHGCEYSVVADRIETGSYLAAAAITGGRVKTTHTDPSLLESVLDKFEEMGAEVTRGEDWIELDMMGKRPKAVSFRTLPHPEFPTDMQAQLMAVNVIGRGFATISETIFENRFMHVPELSRMGANIQVEGNDAIVTGVEKLQAAPVMATDLRASFSLVLAALVAEGDTLIDRIYHIDRGYENIEAKLQSLGAKIKRVS.

Position 22–23 (lysine 22–asparagine 23) interacts with phosphoenolpyruvate. Residue arginine 92 coordinates UDP-N-acetyl-alpha-D-glucosamine. Cysteine 116 acts as the Proton donor in catalysis. Position 116 is a 2-(S-cysteinyl)pyruvic acid O-phosphothioketal (cysteine 116). UDP-N-acetyl-alpha-D-glucosamine-binding positions include arginine 121–glutamine 125, aspartate 306, and isoleucine 328.

The protein belongs to the EPSP synthase family. MurA subfamily.

Its subcellular location is the cytoplasm. The catalysed reaction is phosphoenolpyruvate + UDP-N-acetyl-alpha-D-glucosamine = UDP-N-acetyl-3-O-(1-carboxyvinyl)-alpha-D-glucosamine + phosphate. Its pathway is cell wall biogenesis; peptidoglycan biosynthesis. Functionally, cell wall formation. Adds enolpyruvyl to UDP-N-acetylglucosamine. This Acinetobacter baylyi (strain ATCC 33305 / BD413 / ADP1) protein is UDP-N-acetylglucosamine 1-carboxyvinyltransferase.